The primary structure comprises 279 residues: NADPH-dependent 7-cyano-7-deazaguanine reductase (279 aa).

86 to 88 contributes to the substrate binding site; that stretch reads IES. NADPH is bound at residue 88–89; it reads SK. Cys-187 functions as the Thioimide intermediate in the catalytic mechanism. Catalysis depends on Asp-194, which acts as the Proton donor. Residue 226 to 227 participates in substrate binding; that stretch reads HE. Residue 255–256 coordinates NADPH; the sequence is RG.

The protein belongs to the GTP cyclohydrolase I family. QueF type 2 subfamily. Homodimer.

The protein resides in the cytoplasm. The catalysed reaction is 7-aminomethyl-7-carbaguanine + 2 NADP(+) = 7-cyano-7-deazaguanine + 2 NADPH + 3 H(+). It functions in the pathway tRNA modification; tRNA-queuosine biosynthesis. Functionally, catalyzes the NADPH-dependent reduction of 7-cyano-7-deazaguanine (preQ0) to 7-aminomethyl-7-deazaguanine (preQ1). The sequence is that of NADPH-dependent 7-cyano-7-deazaguanine reductase from Haemophilus influenzae (strain ATCC 51907 / DSM 11121 / KW20 / Rd).